The sequence spans 520 residues: Cytochrome P450 734A1 (520 aa).

Residues 13-33 (VLVLSVILSLVIVKGMSLLWW) form a helical membrane-spanning segment. Cysteine 463 contacts heme.

The protein belongs to the cytochrome P450 family. The cofactor is heme.

The protein localises to the membrane. Cytochrome P450 involved in brassinosteroids (BRs) inactivation and regulation of BRs homeostasis. Inactivates the BRs castasterone (CS) and brassinolide (BL) through carbon 26 hydroxylation. Acts in association with CYP72C1 to inactivate BRs and modulate photomorphogenesis. The chain is Cytochrome P450 734A1 (CYP734A1) from Arabidopsis thaliana (Mouse-ear cress).